The following is a 1074-amino-acid chain: DNA-directed RNA polymerase subunit beta (1074 aa).

Belongs to the RNA polymerase beta chain family. In plastids the minimal PEP RNA polymerase catalytic core is composed of four subunits: alpha, beta, beta', and beta''. When a (nuclear-encoded) sigma factor is associated with the core the holoenzyme is formed, which can initiate transcription.

It is found in the plastid. The protein resides in the chloroplast. The catalysed reaction is RNA(n) + a ribonucleoside 5'-triphosphate = RNA(n+1) + diphosphate. Functionally, DNA-dependent RNA polymerase catalyzes the transcription of DNA into RNA using the four ribonucleoside triphosphates as substrates. The sequence is that of DNA-directed RNA polymerase subunit beta from Chara vulgaris (Common stonewort).